Reading from the N-terminus, the 106-residue chain is Acylphosphatase-2 (106 aa).

An Acylphosphatase-like domain is found at Ser16 to Tyr106. Active-site residues include Arg31 and Asn49. Position 100 is a phosphoserine (Ser100).

It belongs to the acylphosphatase family.

It carries out the reaction an acyl phosphate + H2O = a carboxylate + phosphate + H(+). This Mus musculus (Mouse) protein is Acylphosphatase-2 (Acyp2).